We begin with the raw amino-acid sequence, 348 residues long: MSDDGLVSAAASPEERAFEAGLRPRTLAEFVGQRKVREQLTIMLEGARARGRPPDHVLLSGPPGLGKTSLAMIMAQELEVPLRMTSGPAIERAGDLVAILTALSPGEVLFLDEIHRIARPAEELLYAAMEDFRVDVILGKGPGATAIPLDVSPFTLVGATTRSGLLTGPLRDRFGFTAHLDFYDADELARVLTRSAGLLGVTLTAEGAAEVAGRSRGTPRIANRLLRRVRDYAEVRADGVVTREIAQAALRIYDVDGLGLDRLDRAVLEALVTRFGGGPVGLTTLAVSVGEEPETVEDVAEPFLLRAGLLIRTARGRMATPAAFEHLGLDPVTDPLGRTQVSLFTEGE.

Positions 3–183 (DDGLVSAAAS…FGFTAHLDFY (181 aa)) are large ATPase domain (RuvB-L). Residues Leu-22, Arg-23, Gly-64, Lys-67, Thr-68, Ser-69, 130–132 (EDF), Arg-173, Tyr-183, and Arg-220 contribute to the ATP site. Residue Thr-68 participates in Mg(2+) binding. The interval 184–254 (DADELARVLT…IAQAALRIYD (71 aa)) is small ATPAse domain (RuvB-S). Positions 257–348 (GLGLDRLDRA…TQVSLFTEGE (92 aa)) are head domain (RuvB-H). 2 residues coordinate DNA: Arg-312 and Arg-317.

This sequence belongs to the RuvB family. Homohexamer. Forms an RuvA(8)-RuvB(12)-Holliday junction (HJ) complex. HJ DNA is sandwiched between 2 RuvA tetramers; dsDNA enters through RuvA and exits via RuvB. An RuvB hexamer assembles on each DNA strand where it exits the tetramer. Each RuvB hexamer is contacted by two RuvA subunits (via domain III) on 2 adjacent RuvB subunits; this complex drives branch migration. In the full resolvosome a probable DNA-RuvA(4)-RuvB(12)-RuvC(2) complex forms which resolves the HJ.

The protein localises to the cytoplasm. It catalyses the reaction ATP + H2O = ADP + phosphate + H(+). Its function is as follows. The RuvA-RuvB-RuvC complex processes Holliday junction (HJ) DNA during genetic recombination and DNA repair, while the RuvA-RuvB complex plays an important role in the rescue of blocked DNA replication forks via replication fork reversal (RFR). RuvA specifically binds to HJ cruciform DNA, conferring on it an open structure. The RuvB hexamer acts as an ATP-dependent pump, pulling dsDNA into and through the RuvAB complex. RuvB forms 2 homohexamers on either side of HJ DNA bound by 1 or 2 RuvA tetramers; 4 subunits per hexamer contact DNA at a time. Coordinated motions by a converter formed by DNA-disengaged RuvB subunits stimulates ATP hydrolysis and nucleotide exchange. Immobilization of the converter enables RuvB to convert the ATP-contained energy into a lever motion, pulling 2 nucleotides of DNA out of the RuvA tetramer per ATP hydrolyzed, thus driving DNA branch migration. The RuvB motors rotate together with the DNA substrate, which together with the progressing nucleotide cycle form the mechanistic basis for DNA recombination by continuous HJ branch migration. Branch migration allows RuvC to scan DNA until it finds its consensus sequence, where it cleaves and resolves cruciform DNA. This Frankia casuarinae (strain DSM 45818 / CECT 9043 / HFP020203 / CcI3) protein is Holliday junction branch migration complex subunit RuvB.